The chain runs to 328 residues: MQGFVKDFLKPNLVGIEQINATRAKVTLEPLERGFGHTLGNALRRILLSSMPGAAITEVEIDGVQNEYSIKEGVQEEILEILLNLKGLAVKLEGKNEVLVSLTKSGAGPVIAADITHDSDLEIVNPEHVICHLTGNTEISMRIKIELGRGYVPASSRIHSEEDKSANGRLFVDATFSPVERIAYSVESARVEQRTNLDKLVIDMETDGTLEPEEAIRQAAMILAGQLDEFVDERIISAPVEVEEKPEFDPILLRPVNDLELTVRSANCLKAESIYYIGDLVQRTEVELLKMPNLGRKSLTEIKDDLVSRGLYLGMRLENWPPASLIED.

Residues 1–234 (MQGFVKDFLK…GQLDEFVDER (234 aa)) form an alpha N-terminal domain (alpha-NTD) region. The alpha C-terminal domain (alpha-CTD) stretch occupies residues 248-328 (FDPILLRPVN…NWPPASLIED (81 aa)).

Belongs to the RNA polymerase alpha chain family. In terms of assembly, homodimer. The RNAP catalytic core consists of 2 alpha, 1 beta, 1 beta' and 1 omega subunit. When a sigma factor is associated with the core the holoenzyme is formed, which can initiate transcription.

It carries out the reaction RNA(n) + a ribonucleoside 5'-triphosphate = RNA(n+1) + diphosphate. DNA-dependent RNA polymerase catalyzes the transcription of DNA into RNA using the four ribonucleoside triphosphates as substrates. The sequence is that of DNA-directed RNA polymerase subunit alpha 1 from Psychromonas ingrahamii (strain DSM 17664 / CCUG 51855 / 37).